Consider the following 325-residue polypeptide: uncharacterized protein (325 aa).

A disordered region spans residues 1–75; that stretch reads MSQPPEHPGN…PPPGYPTHLQ (75 aa). Residues 24 to 70 are compositionally biased toward pro residues; the sequence is YPPPGYGAPPPPPGYGPPPGTYLPPGYNAPPPPPGYGPPPGPPPPGY. The next 4 membrane-spanning stretches (helical) occupy residues 96–116, 153–173, 205–225, and 273–293; these read AVTL…VIGA, IVMF…HAGI, LLIV…GLIF, and LVGE…AALI.

It localises to the cell membrane. This is an uncharacterized protein from Mycobacterium tuberculosis (strain ATCC 25618 / H37Rv).